Consider the following 764-residue polypeptide: 1,4-alpha-glucan branching enzyme GlgB (764 aa).

D431 functions as the Nucleophile in the catalytic mechanism. Residue E484 is the Proton donor of the active site.

Belongs to the glycosyl hydrolase 13 family. GlgB subfamily. Monomer.

It catalyses the reaction Transfers a segment of a (1-&gt;4)-alpha-D-glucan chain to a primary hydroxy group in a similar glucan chain.. It participates in glycan biosynthesis; glycogen biosynthesis. Its function is as follows. Catalyzes the formation of the alpha-1,6-glucosidic linkages in glycogen by scission of a 1,4-alpha-linked oligosaccharide from growing alpha-1,4-glucan chains and the subsequent attachment of the oligosaccharide to the alpha-1,6 position. The chain is 1,4-alpha-glucan branching enzyme GlgB from Synechococcus sp. (strain CC9902).